A 1082-amino-acid polypeptide reads, in one-letter code: SURP and G-patch domain-containing protein 2 (1082 aa).

Thr-7 carries the post-translational modification Phosphothreonine. The segment at 65–97 (LSGSVAHSRDAGREGLRSDVFPGPSFRSSNPSI) is disordered. Basic and acidic residues predominate over residues 71–81 (HSRDAGREGLR). 2 positions are modified to phosphoserine: Ser-96 and Ser-224. A Glycyl lysine isopeptide (Lys-Gly) (interchain with G-Cter in SUMO2) cross-link involves residue Lys-228. Phosphothreonine is present on Thr-275. Ser-277 bears the Phosphoserine mark. A Glycyl lysine isopeptide (Lys-Gly) (interchain with G-Cter in SUMO2) cross-link involves residue Lys-305. Phosphoserine is present on residues Ser-315, Ser-573, and Ser-603. Residues 590-633 (IDQLVKRVIEGSLSPKERTLLKEDPAYWFLSDENSLEYKYYKLK) form an SURP motif 1 repeat. Lys-650 participates in a covalent cross-link: Glycyl lysine isopeptide (Lys-Gly) (interchain with G-Cter in SUMO2). The disordered stretch occupies residues 694–779 (RRATTGTQTL…QTSSPCPSAD (86 aa)). Over residues 697–708 (TTGTQTLLSSGT) the composition is skewed to low complexity. Residues 727–738 (LPDRNDAAKDCP) are compositionally biased toward basic and acidic residues. Residues Ser-754 and Ser-757 each carry the phosphoserine modification. One copy of the SURP motif 2 repeat lies at 787-830 (TAEKLARFVAQVGPEIEQFSIENSTDNPDLWFLHDQNSSAFKFY). Disordered stretches follow at residues 849-930 (NLHT…EAAE), 982-1002 (RIAY…PKDL), and 1030-1061 (LGSL…EHKE). A Phosphoserine modification is found at Ser-863. 2 stretches are compositionally biased toward acidic residues: residues 868 to 877 (MEGEAEFEDE) and 885 to 904 (LESP…DGGE). Residues 990-999 (GRPMSKKKKP) show a composition bias toward basic residues. Positions 995 to 1000 (KKKKPK) match the Nuclear localization signal motif. The 47-residue stretch at 1011 to 1057 (DKNLGFQMLQKMGWKEGHGLGSLGKGIREPVSVGTPSEGEGLGADGQ) folds into the G-patch domain.

In terms of tissue distribution, detected in adult testis, and in fetal brain and kidney.

The protein resides in the nucleus. In terms of biological role, may play a role in mRNA splicing. This Homo sapiens (Human) protein is SURP and G-patch domain-containing protein 2 (SUGP2).